We begin with the raw amino-acid sequence, 361 residues long: Phospho-N-acetylmuramoyl-pentapeptide-transferase (361 aa).

A run of 10 helical transmembrane segments spans residues 26 to 46 (AGGAILTSLLICFVAGPCIIE), 71 to 91 (TPTMGGLLILLSVVASTFLWA), 97 to 117 (FILWLLTGTLWLGFLGFCDDY), 134 to 154 (IFGQTVFAAVLAAYLNFFPSN), 168 to 188 (GFFINFSFLYALFVIIVIVGS), 200 to 220 (GLAIGNITIVAFSLTLFAYFA), 236 to 256 (GAGEISIFLFAVVGSSLGFLW), 264 to 284 (IFMGDTGSLFLGGVLGMVSLF), 290 to 310 (VLVLLGGVFVIEALSVLIQIF), and 338 to 358 (KVTVRFWIAGVILAILSFASL).

Belongs to the glycosyltransferase 4 family. MraY subfamily. The cofactor is Mg(2+).

It is found in the cell membrane. The enzyme catalyses UDP-N-acetyl-alpha-D-muramoyl-L-alanyl-gamma-D-glutamyl-meso-2,6-diaminopimeloyl-D-alanyl-D-alanine + di-trans,octa-cis-undecaprenyl phosphate = di-trans,octa-cis-undecaprenyl diphospho-N-acetyl-alpha-D-muramoyl-L-alanyl-D-glutamyl-meso-2,6-diaminopimeloyl-D-alanyl-D-alanine + UMP. It functions in the pathway cell wall biogenesis; peptidoglycan biosynthesis. In terms of biological role, catalyzes the initial step of the lipid cycle reactions in the biosynthesis of the cell wall peptidoglycan: transfers peptidoglycan precursor phospho-MurNAc-pentapeptide from UDP-MurNAc-pentapeptide onto the lipid carrier undecaprenyl phosphate, yielding undecaprenyl-pyrophosphoryl-MurNAc-pentapeptide, known as lipid I. In Endomicrobium trichonymphae, this protein is Phospho-N-acetylmuramoyl-pentapeptide-transferase.